The following is a 465-amino-acid chain: UDP-N-acetylmuramoylalanine--D-glutamate ligase (465 aa).

127 to 133 (GSNGKST) contacts ATP.

The protein belongs to the MurCDEF family.

Its subcellular location is the cytoplasm. It carries out the reaction UDP-N-acetyl-alpha-D-muramoyl-L-alanine + D-glutamate + ATP = UDP-N-acetyl-alpha-D-muramoyl-L-alanyl-D-glutamate + ADP + phosphate + H(+). Its pathway is cell wall biogenesis; peptidoglycan biosynthesis. Cell wall formation. Catalyzes the addition of glutamate to the nucleotide precursor UDP-N-acetylmuramoyl-L-alanine (UMA). This chain is UDP-N-acetylmuramoylalanine--D-glutamate ligase, found in Cereibacter sphaeroides (strain ATCC 17023 / DSM 158 / JCM 6121 / CCUG 31486 / LMG 2827 / NBRC 12203 / NCIMB 8253 / ATH 2.4.1.) (Rhodobacter sphaeroides).